A 477-amino-acid polypeptide reads, in one-letter code: Bifunctional protein HldE (477 aa).

Positions 1–318 (MKVTLPEFER…ENAVRGRADT (318 aa)) are ribokinase. Lysine 179 is subject to N6-acetyllysine. 195–198 (NLSE) contacts ATP. Residue aspartate 264 is part of the active site. The cytidylyltransferase stretch occupies residues 344 to 477 (MTNGVFDILH…IKKIQQDKKG (134 aa)).

In the N-terminal section; belongs to the carbohydrate kinase PfkB family. It in the C-terminal section; belongs to the cytidylyltransferase family. As to quaternary structure, homodimer.

It catalyses the reaction D-glycero-beta-D-manno-heptose 7-phosphate + ATP = D-glycero-beta-D-manno-heptose 1,7-bisphosphate + ADP + H(+). The enzyme catalyses D-glycero-beta-D-manno-heptose 1-phosphate + ATP + H(+) = ADP-D-glycero-beta-D-manno-heptose + diphosphate. The protein operates within nucleotide-sugar biosynthesis; ADP-L-glycero-beta-D-manno-heptose biosynthesis; ADP-L-glycero-beta-D-manno-heptose from D-glycero-beta-D-manno-heptose 7-phosphate: step 1/4. Its pathway is nucleotide-sugar biosynthesis; ADP-L-glycero-beta-D-manno-heptose biosynthesis; ADP-L-glycero-beta-D-manno-heptose from D-glycero-beta-D-manno-heptose 7-phosphate: step 3/4. In terms of biological role, catalyzes the phosphorylation of D-glycero-D-manno-heptose 7-phosphate at the C-1 position to selectively form D-glycero-beta-D-manno-heptose-1,7-bisphosphate. Catalyzes the ADP transfer from ATP to D-glycero-beta-D-manno-heptose 1-phosphate, yielding ADP-D-glycero-beta-D-manno-heptose. The sequence is that of Bifunctional protein HldE from Escherichia coli O17:K52:H18 (strain UMN026 / ExPEC).